A 134-amino-acid chain; its full sequence is Profilin-1 (134 aa).

A disulfide bridge links cysteine 13 with cysteine 118. Positions 84 to 100 (AVVRGKKGSGGITIKKT) match the Involved in PIP2 interaction motif. Threonine 114 carries the post-translational modification Phosphothreonine.

Belongs to the profilin family. In terms of assembly, occurs in many kinds of cells as a complex with monomeric actin in a 1:1 ratio. In terms of processing, phosphorylated by MAP kinases.

Its subcellular location is the cytoplasm. It is found in the cytoskeleton. In terms of biological role, binds to actin and affects the structure of the cytoskeleton. At high concentrations, profilin prevents the polymerization of actin, whereas it enhances it at low concentrations. The chain is Profilin-1 from Olea europaea (Common olive).